The following is a 119-amino-acid chain: Large ribosomal subunit protein uL18 (119 aa).

It belongs to the universal ribosomal protein uL18 family. Part of the 50S ribosomal subunit; part of the 5S rRNA/L5/L18/L25 subcomplex. Contacts the 5S and 23S rRNAs.

Its function is as follows. This is one of the proteins that bind and probably mediate the attachment of the 5S RNA into the large ribosomal subunit, where it forms part of the central protuberance. The sequence is that of Large ribosomal subunit protein uL18 from Anaeromyxobacter dehalogenans (strain 2CP-C).